The primary structure comprises 258 residues: UPF0246 protein YaaA (258 aa).

The protein belongs to the UPF0246 family.

This is UPF0246 protein YaaA from Shigella boydii serotype 18 (strain CDC 3083-94 / BS512).